A 49-amino-acid chain; its full sequence is MRVKINLKCSSCDSINYLTSKNSKTHPDKIEVLKYCPKERKVTLHLESK.

Belongs to the bacterial ribosomal protein bL33 family.

The polypeptide is Large ribosomal subunit protein bL33A (Streptococcus pneumoniae (strain Hungary19A-6)).